A 714-amino-acid polypeptide reads, in one-letter code: Protein spire homolog 2 (714 aa).

One can recognise a KIND domain in the interval 22–203 (LSLEEVLKAY…RALFVETLEL (182 aa)). A disordered region spans residues 136–162 (DSEDSGCGAADEGYGGPEEEEEAEGVP). WH2 domains follow at residues 248–262 (QLMR…LKKV), 278–296 (PFEM…LRKV), and 342–359 (LHEK…LRPV). Residues Ser-371, Ser-440, Ser-442, and Ser-476 each carry the phosphoserine modification. Positions 453 to 516 (VASGLQSATH…SSGDRPEASM (64 aa)) are disordered. Polar residues predominate over residues 486–496 (DQGTCPASVSD). Residues 534 to 554 (LALTVEEVMDVRRVLVKAEME) form a spir-box region.

This sequence belongs to the spire family.

It localises to the cytoplasm. The protein resides in the cytoskeleton. It is found in the cytosol. Its subcellular location is the cell membrane. The protein localises to the cytoplasmic vesicle membrane. Acts as an actin nucleation factor, remains associated with the slow-growing pointed end of the new filament. Involved in intracellular vesicle transport along actin fibers, providing a novel link between actin cytoskeleton dynamics and intracellular transport. Required for asymmetric spindle positioning and asymmetric cell division during meiosis. Required for normal formation of the cleavage furrow and for polar body extrusion during female germ cell meiosis. Also acts in the nucleus: together with SPIRE1 and SPIRE2, promotes assembly of nuclear actin filaments in response to DNA damage in order to facilitate movement of chromatin and repair factors after DNA damage. The polypeptide is Protein spire homolog 2 (SPIRE2) (Homo sapiens (Human)).